A 319-amino-acid polypeptide reads, in one-letter code: Bidirectional sugar transporter SWEET15 (319 aa).

The Extracellular portion of the chain corresponds to methionine 1–threonine 10. Residues tryptophan 11–leucine 31 form a helical membrane-spanning segment. Residues phenylalanine 13–serine 99 enclose the MtN3/slv 1 domain. At proline 32–proline 50 the chain is on the cytoplasmic side. The chain crosses the membrane as a helical span at residues tyrosine 51–alanine 71. Residue glutamate 72 is a topological domain, extracellular. The helical transmembrane segment at leucine 73 to leucine 93 threads the bilayer. Over alanine 94–lysine 106 the chain is Cytoplasmic. Residues methionine 107–serine 127 traverse the membrane as a helical segment. Residues arginine 128–histidine 134 lie on the Extracellular side of the membrane. Residues valine 135–isoleucine 155 form a helical membrane-spanning segment. The region spanning valine 135–lysine 219 is the MtN3/slv 2 domain. Residues arginine 156 to methionine 167 lie on the Cytoplasmic side of the membrane. The helical transmembrane segment at proline 168–leucine 188 threads the bilayer. At lysine 189–aspartate 191 the chain is on the extracellular side. Residues valine 192–tyrosine 212 traverse the membrane as a helical segment. Over methionine 213 to valine 319 the chain is Cytoplasmic.

The protein belongs to the SWEET sugar transporter family. Forms homooligomers and/or heterooligomers.

Its subcellular location is the cell membrane. Its function is as follows. Mediates both low-affinity uptake and efflux of sugar across the plasma membrane. The chain is Bidirectional sugar transporter SWEET15 (SWEET15) from Oryza sativa subsp. indica (Rice).